Reading from the N-terminus, the 707-residue chain is Choline transporter-like protein 4 (707 aa).

Over 1–32 (MGKKQKENEAYGNSAKYDPSFRGPIKNRGCTD) the chain is Cytoplasmic. The chain crosses the membrane as a helical span at residues 33–53 (IICCVLFLVFILGYIVVGLVA). Residues 54–227 (WVYGDPRQVL…KIFEDFAQSW (174 aa)) lie on the Extracellular side of the membrane. Asn-67, Asn-185, Asn-195, and Asn-196 each carry an N-linked (GlcNAc...) asparagine glycan. The chain crosses the membrane as a helical span at residues 228 to 248 (YWILVALGVALVLSLLFILLL). Over 249-250 (RL) the chain is Cytoplasmic. The chain crosses the membrane as a helical span at residues 251 to 271 (VAAPLVLLLIVGVLAVLAYGI). At 272-307 (YHCWQQYRELRDQGVSITQLGFTANLSAYQNVKETW) the chain is on the extracellular side. Asn-296 carries an N-linked (GlcNAc...) asparagine glycan. Residues 308–328 (LAALIILAVLEGVLLLMLIFL) traverse the membrane as a helical segment. At 329 to 356 (RQRIRIAIALLKEASRAVGQMMSTMFYP) the chain is on the cytoplasmic side. The helical transmembrane segment at 357 to 377 (LVTFVLLVICIGYWAVTALYL) threads the bilayer. Over 378 to 452 (ATSGQPQYVY…GILGLFWTVN (75 aa)) the chain is Extracellular. Asn-391, Asn-403, and Asn-413 each carry an N-linked (GlcNAc...) asparagine glycan. A helical transmembrane segment spans residues 453–473 (WVLALGQCVLAGAFASFYWAF). The Cytoplasmic segment spans residues 474-498 (HKPRDIPTFPLSSAFIRTLRYHTGS). A helical transmembrane segment spans residues 499–519 (LAFGALILTLVQIARVILEYI). Residues 520 to 557 (DHKLRGSQNPVARCIICCFKCCLWCLEKFIKFLNRNAY) are Extracellular-facing. Residues 558 to 578 (IMIAIYGKNFCVSAKNAFMLL) traverse the membrane as a helical segment. The Cytoplasmic portion of the chain corresponds to 579–594 (MRNVVRVVVLDKVTDL). Residues 595–615 (LLFFGKLLVVGGVGVLSFFFF) form a helical membrane-spanning segment. Over 616-635 (SGRIKGLGKDFKNPDLNYYW) the chain is Extracellular. A helical membrane pass occupies residues 636 to 656 (LPIMTSIMGAYVIASGFFSVF). The Cytoplasmic portion of the chain corresponds to 657-707 (GMCVDTLFLCFLEDLERNDGSQERPYYMPKALLKILGKKNEVPTGGKNRKK).

Belongs to the CTL (choline transporter-like) family. In terms of processing, N-glycosylated; N-glycosylation of Asn-67 and Asn-391 is required for a proper thiamine pyrophosphate uptake. Highly expressed in intestine, kidney and stomach. Also expressed in testis and lung.

The protein localises to the membrane. It localises to the apical cell membrane. It catalyses the reaction choline(out) + n H(+)(in) = choline(in) + n H(+)(out). The catalysed reaction is thiamine diphosphate(out) = thiamine diphosphate(in). Its function is as follows. Choline transporter that plays a role in the choline-acetylcholine system and is required to the efferent innervation of hair cells in the olivocochlear bundle for the maintenance of physiological function of outer hair cells and the protection of hair cells from acoustic injury. Also described as a thiamine pyrophosphate transporter in colon, may mediate the absorption of microbiota-generated thiamine pyrophosphate and contribute to host thiamine (vitamin B1) homeostasis. In Rattus norvegicus (Rat), this protein is Choline transporter-like protein 4.